The chain runs to 295 residues: MKPTAFDYIRPTSLPEALAILAEHSDDVAILAGGQSLMPLLNFRMSRPALVLDINDISELQQVRCENDTLYVGSMVRHCRVEQEEIFRSTIPLMSEAMTSVAHIQIKTRGTLGGNLCNAHPASEMPAVITALGASMVCKSEKRGERVLTPEEFFEGALQNGLQSDELLCEIRIPVPSQYVGWAFEEVARRHGDFAQCGAAVLIGAEDRKIDYARIALCSIGETPIRFHALEQWLIGRPVGNDLPADVKLHCREILDVAEDSTMTAENRAKLASAVTSRAIARAADRIVHLDVKRG.

The FAD-binding PCMH-type domain occupies 1 to 178 (MKPTAFDYIR…CEIRIPVPSQ (178 aa)). Residues 32–36 (AGGQS) and 111–115 (TLGGN) contribute to the FAD site.

As to quaternary structure, heterotrimer composed of an alpha (CdhA), a beta (CdhB) and a gamma (CdhC) subunit.

It catalyses the reaction caffeine + a ubiquinone + H2O = 1,3,7-trimethylurate + a ubiquinol. The enzyme catalyses ubiquinone-0 + caffeine + H2O = ubiquinol-0 + 1,3,7-trimethylurate. The catalysed reaction is theobromine + a ubiquinone + H2O = 3,7-dimethylurate + a ubiquinol. In terms of biological role, component of the caffeine dehydrogenase complex that catalyzes the hydrolytical oxidation of 1,3,7-trimethylxanthine (caffeine) by incorporation of an oxygen atom originating from a water molecule into position C-8 to produce 1,3,7-trimethyluric acid (TMU). Coenzyme Q0 (ubiquinone-0) is the preferred electron acceptor and, to a lesser extent, coenzyme Q2 (ubiquinone-2) can also be used, but oxygen and NAD(P)(+) cannot. Is involved in a caffeine degradation pathway that allows Pseudomonas sp. strain CBB1 to grow on caffeine as the sole carbon and nitrogen source. Is also active with theobromine as substrate, but shows a very poor activity with theophylline and is not active with xanthine, 3-methylxanthine, 7-methylxanthine, TMU, and 3,7-dimethylurate. The chain is Caffeine dehydrogenase subunit beta from Pseudomonas sp. (strain CBB1).